The primary structure comprises 1109 residues: Coiled-coil domain-containing protein 158 (1109 aa).

Over residues 1 to 12 the composition is skewed to basic and acidic residues; the sequence is MESKACESKNED. Residues 1–31 are disordered; sequence MESKACESKNEDLLPSGITSKGGSSSPFFVT. Polar residues predominate over residues 17-31; sequence GITSKGGSSSPFFVT. Coiled coils occupy residues 71-166 and 242-828; these read GKEH…MLKD and VEDQ…QEQE. Disordered stretches follow at residues 843 to 897 and 952 to 1061; these read LQGP…DPTR and HRSN…TGKT. Composition is skewed to polar residues over residues 862–882, 953–970, and 988–998; these read ASVT…SFLS, RSNN…SSET, and SCFTFTSTASP. Positions 999 to 1019 are enriched in low complexity; that stretch reads SGKMSASRSFSSSPKKSPVHS. 2 stretches are compositionally biased toward polar residues: residues 1020–1037 and 1043–1061; these read LLTS…QYRS and SPTS…TGKT. Residues 1053-1109 adopt a coiled-coil conformation; it reads PSLETTGKTCQKLQNRLESLQTLVEDLQLKNQAMSSMIRNQEKRIQKVKDQEKMLLK.

In Mus musculus (Mouse), this protein is Coiled-coil domain-containing protein 158 (Ccdc158).